The following is a 138-amino-acid chain: Regulator of ribonuclease activity B (138 aa).

Positions 114–138 (YFEDPNGEDGDDEDFVDEDDDGVRH) are disordered. Residues 118 to 138 (PNGEDGDDEDFVDEDDDGVRH) are compositionally biased toward acidic residues.

This sequence belongs to the RraB family. In terms of assembly, interacts with the C-terminal region of Rne.

The protein localises to the cytoplasm. Functionally, globally modulates RNA abundance by binding to RNase E (Rne) and regulating its endonucleolytic activity. Can modulate Rne action in a substrate-dependent manner by altering the composition of the degradosome. The protein is Regulator of ribonuclease activity B of Escherichia coli (strain K12).